The chain runs to 723 residues: Threonine--tRNA ligase 1, cytoplasmic (723 aa).

Residues 1-46 (MFEEKASSPSGKMGGEEKPIGAGEEKQKEGGKKKNKEGSGDGGRAE) are disordered. Residues 14–39 (GGEEKPIGAGEEKQKEGGKKKNKEGS) show a composition bias toward basic and acidic residues. Ser39 carries the post-translational modification Phosphoserine. The region spanning 79-143 (DSKPIKVTLP…EEDCTLELLK (65 aa)) is the TGS domain. Lys243 is modified (N6-acetyllysine). Thr246 bears the Phosphothreonine mark. Tyr298 bears the Phosphotyrosine mark. A Phosphothreonine modification is found at Thr453. Ser702 bears the Phosphoserine mark.

The protein belongs to the class-II aminoacyl-tRNA synthetase family. Homodimer. Post-translationally, ISGylated.

It is found in the cytoplasm. It catalyses the reaction tRNA(Thr) + L-threonine + ATP = L-threonyl-tRNA(Thr) + AMP + diphosphate + H(+). Inhibited by borrelidin (BN, IC 50 is 7 nM), which binds to 4 distinct subsites in the protein, preventing binding of all 3 substrates. Its function is as follows. Catalyzes the attachment of threonine to tRNA(Thr) in a two-step reaction: threonine is first activated by ATP to form Thr-AMP and then transferred to the acceptor end of tRNA(Thr). Also edits incorrectly charged tRNA(Thr) via its editing domain, at the post-transfer stage. This Homo sapiens (Human) protein is Threonine--tRNA ligase 1, cytoplasmic.